Reading from the N-terminus, the 251-residue chain is tRNA1(Val) (adenine(37)-N6)-methyltransferase (251 aa).

The protein belongs to the methyltransferase superfamily. tRNA (adenine-N(6)-)-methyltransferase family.

It localises to the cytoplasm. The catalysed reaction is adenosine(37) in tRNA1(Val) + S-adenosyl-L-methionine = N(6)-methyladenosine(37) in tRNA1(Val) + S-adenosyl-L-homocysteine + H(+). Functionally, specifically methylates the adenine in position 37 of tRNA(1)(Val) (anticodon cmo5UAC). In Shewanella frigidimarina (strain NCIMB 400), this protein is tRNA1(Val) (adenine(37)-N6)-methyltransferase.